A 654-amino-acid chain; its full sequence is MNDSEALQAATVRIRNIGGIDERRVRLDPGVTVLTGRNATNRTSFLRALMGACGSDAISLKGDADEGSVELELDGRTYTRLLSRENGTVSTDGTPYLRDAATADRFAFLLGSNEARRAVVAERDLYDVIMSLVDTDAIEAEIERLQSRRTQVERRLDSLDSLDADRRSLESKRDDLEAEIEALEAERDDIEAEIEAEDRTVETQREHQAELDEVLSELQSARSDLESVRFRLQSERESVESLREERSELQSELDSFDAEAVDRGEASDRIESVRSRIESLNSTISELQTVVQYTEDVLDGKAGLVEDSLGADGDGSVTDQLVSSETTTCWTCGTEVDRDQIRGTTDRLREVRDEKREERAELRRELDELERSMRAAEQAERDRRKLRDKLRRLEDELDRRTGQIESLTDRREELAEQVDALEADASELRGQSGGEGDLIELHRELNEVEFALDRTRDDLASVHDELDELDDRFDEREELEREREQVNEELEAARTRIRSLTAAAVESFNEEMETVLDLLGYDNIERVWLERVERRVREGRRKVEKAQFELHIVRASDSGAVYEDSIDHLSESEREVVGLVFALAGYLVHEVYEEVPFMLLDSVEAIDAGRIAALVDHFEQYPTFLVAALLPEDAQALDASYRRVTWGTDVTPAA.

Coiled-coil stretches lie at residues 135-290 (TDAI…LQTV) and 341-503 (IRGT…LTAA).

This sequence belongs to the Sph1/Sph2 family.

In terms of biological role, involved in cell-shape determination. Required for the formation of rods and wild-type-like motility. The polypeptide is Smc-like protein Sph3 (Haloferax volcanii (strain ATCC 29605 / DSM 3757 / JCM 8879 / NBRC 14742 / NCIMB 2012 / VKM B-1768 / DS2) (Halobacterium volcanii)).